A 328-amino-acid polypeptide reads, in one-letter code: Nickel import system permease protein NikB (328 aa).

6 helical membrane-spanning segments follow: residues 11 to 31 (LMQMIVVLFVISTLTFILMKL), 104 to 124 (LLISFSTLVLSLCISIPLGII), 139 to 159 (VISTLSISLPAFFIGIILLFI), 170 to 190 (ILSQFILPVITLSLGMCAYII), 229 to 249 (ILPIIPLLGISLGSLIGGTVV), and 279 to 299 (VLFIGFFVVIINTIADLLTLL). One can recognise an ABC transmembrane type-1 domain in the interval 100–297 (APITLLISFS…IINTIADLLT (198 aa)).

The protein belongs to the binding-protein-dependent transport system permease family. OppBC subfamily. In terms of assembly, the complex is composed of two ATP-binding proteins (NikD and NikE), two transmembrane proteins (NikB and NikC) and a solute-binding protein (NikA).

The protein localises to the cell membrane. In terms of biological role, part of the ABC transporter complex NikABCDE (Opp2) involved in nickel import. Probably responsible for the translocation of the substrate across the membrane. In Staphylococcus aureus (strain bovine RF122 / ET3-1), this protein is Nickel import system permease protein NikB.